Consider the following 198-residue polypeptide: Regulation of enolase protein 1 (198 aa).

It localises to the cytoplasm. Functions in the galactose metabolic pathway via the GAL83 protein and that it may control the level of ENO1. This chain is Regulation of enolase protein 1 (REE1), found in Saccharomyces cerevisiae (strain ATCC 204508 / S288c) (Baker's yeast).